Here is a 317-residue protein sequence, read N- to C-terminus: Beta-ketoacyl-[acyl-carrier-protein] synthase III (317 aa).

Active-site residues include Cys112 and His244. Residues 245-249 (QANLR) form an ACP-binding region. Residue Asn274 is part of the active site.

This sequence belongs to the thiolase-like superfamily. FabH family. Homodimer.

The protein localises to the cytoplasm. The catalysed reaction is malonyl-[ACP] + acetyl-CoA + H(+) = 3-oxobutanoyl-[ACP] + CO2 + CoA. It functions in the pathway lipid metabolism; fatty acid biosynthesis. In terms of biological role, catalyzes the condensation reaction of fatty acid synthesis by the addition to an acyl acceptor of two carbons from malonyl-ACP. Catalyzes the first condensation reaction which initiates fatty acid synthesis and may therefore play a role in governing the total rate of fatty acid production. Possesses both acetoacetyl-ACP synthase and acetyl transacylase activities. Its substrate specificity determines the biosynthesis of branched-chain and/or straight-chain of fatty acids. The sequence is that of Beta-ketoacyl-[acyl-carrier-protein] synthase III from Citrobacter koseri (strain ATCC BAA-895 / CDC 4225-83 / SGSC4696).